The sequence spans 40 residues: Beta-glucosidase 1 (40 aa).

The catalysed reaction is Hydrolysis of terminal, non-reducing beta-D-glucosyl residues with release of beta-D-glucose.. The protein is Beta-glucosidase 1 of Passalora fulva (Tomato leaf mold).